Consider the following 145-residue polypeptide: Peptide methionine sulfoxide reductase MsrB (145 aa).

Residues 6 to 129 (KNERLKQLTD…NSAALRFIPV (124 aa)) enclose the MsrB domain. Residue Cys118 is the Nucleophile of the active site.

The protein belongs to the MsrB Met sulfoxide reductase family.

The enzyme catalyses L-methionyl-[protein] + [thioredoxin]-disulfide + H2O = L-methionyl-(R)-S-oxide-[protein] + [thioredoxin]-dithiol. The chain is Peptide methionine sulfoxide reductase MsrB from Listeria innocua serovar 6a (strain ATCC BAA-680 / CLIP 11262).